An 858-amino-acid chain; its full sequence is Protein lines (858 aa).

The disordered stretch occupies residues 1-102; that stretch reads MDTSSAAGSG…NSPTTTPCSS (102 aa). Low complexity-rich tracts occupy residues 20–30 and 65–102; these read STVATSTTSAS and LDAN…PCSS.

It belongs to the protein lines family. In terms of assembly, interacts with drm. As to expression, expressed throughout the embryo, including the hindgut, posterior midgut and embryonic epidermis.

The protein localises to the cytoplasm. It is found in the nucleus. Its function is as follows. Has a dual role as a segment polarity protein and as a modulator of the Abd-B protein. Required for Abd-B to activate the transcription of genes (including ems, cut and sal) that are involved in posterior spiracle morphogenesis. Also required for Abd-B to form an eighth abdominal denticle belt. Acts in a hierarchy downstream of drm and upstream of bowl during foregut and hindgut patterning and morphogenesis. Involved in cell rearrangement during elongation of the embryonic hindgut. Required to regulate expression of embryonic hindgut patterning genes in order to establish the large intestine and at least some rectum, and to repress small intestine fate. Required for late wingless (wg)-dependent cell fate specification in the dorsal embryonic epidermis. Acts in concert with wg to regulate expression of wg itself and also to regulate wg-target genes. May have a role in ventral epidermal patterning, independent of wg signaling. The chain is Protein lines from Drosophila melanogaster (Fruit fly).